Reading from the N-terminus, the 247-residue chain is Diglucosylglycerate octanoyltransferase (247 aa).

The protein belongs to the OctT acyltransferase family. Homotetramer.

The catalysed reaction is (2R)-2-O-[alpha-D-glucopyranosyl-(1-&gt;6)-alpha-D-glucopyranosyl]-glycerate + octanoyl-CoA = (2R)-2-O-[6-O-octanoyl-alpha-D-glucopyranosyl-(1-&gt;6)-alpha-D-glucopyranosyl]-glycerate + CoA. In terms of biological role, sugar octanoyltransferase likely involved in the biosynthesis of mycobacterial methylglucose lipopolysaccharide (MGLP). Catalyzes the transfer of an octanoyl group from octanoyl-CoA to the C6 OH of the second glucose in diglucosylglycerate (DGG). DGG is the preferred acceptor, but to a lesser extent, GG (glucosylglycerate) can also be used as substrate. DGG and GG are the two earliest intermediates in MGLP biosynthesis. The polypeptide is Diglucosylglycerate octanoyltransferase (Mycobacterium tuberculosis (strain ATCC 25618 / H37Rv)).